The sequence spans 391 residues: Terminal nucleotidyltransferase 5C (391 aa).

It belongs to the TENT family. In terms of assembly, interacts with BCCIP and PABPC1; the interaction has no effect on TENT5C poly(A) polymerase function. Interacts with PLK4; this interaction leads to the TENT5C recruitment into the centrosome.

Its subcellular location is the nucleus. The protein localises to the cytoplasm. It is found in the cytoskeleton. It localises to the microtubule organizing center. The protein resides in the centrosome. It carries out the reaction RNA(n) + ATP = RNA(n)-3'-adenine ribonucleotide + diphosphate. Catalyzes the transfer of one adenosine molecule from an ATP to an mRNA poly(A) tail bearing a 3'-OH terminal group and enhances mRNA stability and gene expression. Can also elongate RNA oligos ending with uridine molecule, provided that the sequence is adenosine-rich. Mainly targets mRNAs encoding endoplasmic reticulum-targeted protein. The protein is Terminal nucleotidyltransferase 5C of Rattus norvegicus (Rat).